The sequence spans 592 residues: Inactive metallocarboxypeptidase ECM14 (592 aa).

The N-terminal stretch at 1–21 (MRQFTHGTLLAILALANTISA) is a signal peptide. Residues 22–174 (IPSFSANNYP…QTVYESYPSS (153 aa)) constitute a propeptide that is removed on maturation. Polar residues predominate over residues 170–179 (SYPSSSQRPT). The interval 170-191 (SYPSSSQRPTDNGRGFLPSRES) is disordered. The 320-residue stretch at 202–521 (DYQPLSVIGP…NAVMVLAKFL (320 aa)) folds into the Peptidase M14 domain. Zn(2+) contacts are provided by His-264 and Glu-267. Residues 264–267 (HARE), Arg-322, and 339–340 (DR) each bind substrate. A disulfide bridge links Cys-333 with Cys-356. N-linked (GlcNAc...) asparagine glycosylation occurs at Asn-349. His-396 is a binding site for Zn(2+). 397–398 (SY) lines the substrate pocket. The segment at 542 to 592 (ADKPILDDGDDDEEEDGQDKKDDSWIPDEYKNDNDHDDDDDGWGLRRRRKR) is disordered. Over residues 548 to 558 (DDGDDDEEEDG) the composition is skewed to acidic residues. Basic and acidic residues predominate over residues 559-575 (QDKKDDSWIPDEYKNDN).

This sequence belongs to the peptidase M14 family. It depends on Zn(2+) as a cofactor.

The protein localises to the vacuole. It localises to the secreted. Inactive carboxypeptidase that may play a role in cell wall organization and biogenesis. This Ajellomyces dermatitidis (strain ER-3 / ATCC MYA-2586) (Blastomyces dermatitidis) protein is Inactive metallocarboxypeptidase ECM14 (ECM14).